The primary structure comprises 320 residues: MIDFRPFYQQIATSPLSAWLETLPLQLKQWEKQTHGDYAKWAKMLDHLPSLPCEVNLADKVEARLVEPLSAGETQRLVHHLKQLMPWRKGPYHLYGVHIDCEWRSDFKWDRVLPHLSPLKDRLILDVGCGSGYHMWRMVGEGAKMVVGIDPTELFLCQFEAVRKLLNNDRRANLIPLGIEQMQPLQAFDTVFSMGVLYHRKSPLDHLAQLKNQLVKGGELVLETLVIDGDINDVLVPADRYAKMKNVYFIPSVPALINWLEKVGFKNVRCVDEAVTTSEEQRKTDWLENETLVDFLDPQDHSKTIEGYPAPKRAVIIATN.

Residues lysine 89, tryptophan 103, lysine 108, glycine 128, 150-152, 179-180, methionine 194, tyrosine 198, and arginine 313 each bind carboxy-S-adenosyl-L-methionine; these read DPT and IE.

The protein belongs to the class I-like SAM-binding methyltransferase superfamily. CmoB family. Homotetramer.

The enzyme catalyses carboxy-S-adenosyl-L-methionine + 5-hydroxyuridine(34) in tRNA = 5-carboxymethoxyuridine(34) in tRNA + S-adenosyl-L-homocysteine + H(+). Catalyzes carboxymethyl transfer from carboxy-S-adenosyl-L-methionine (Cx-SAM) to 5-hydroxyuridine (ho5U) to form 5-carboxymethoxyuridine (cmo5U) at position 34 in tRNAs. The protein is tRNA U34 carboxymethyltransferase of Glaesserella parasuis serovar 5 (strain SH0165) (Haemophilus parasuis).